We begin with the raw amino-acid sequence, 750 residues long: Eukaryotic translation initiation factor 3 subunit B (750 aa).

One can recognise an RRM domain in the interval Thr-42–Asp-128. WD repeat units follow at residues Asp-195–Arg-234, Pro-236–Ser-292, Ser-309–Lys-348, and Leu-519–Glu-562.

This sequence belongs to the eIF-3 subunit B family. In terms of assembly, component of the eukaryotic translation initiation factor 3 (eIF-3) complex.

It localises to the cytoplasm. Its function is as follows. RNA-binding component of the eukaryotic translation initiation factor 3 (eIF-3) complex, which is involved in protein synthesis of a specialized repertoire of mRNAs and, together with other initiation factors, stimulates binding of mRNA and methionyl-tRNAi to the 40S ribosome. The eIF-3 complex specifically targets and initiates translation of a subset of mRNAs involved in cell proliferation. The polypeptide is Eukaryotic translation initiation factor 3 subunit B (Chaetomium globosum (strain ATCC 6205 / CBS 148.51 / DSM 1962 / NBRC 6347 / NRRL 1970) (Soil fungus)).